Here is a 48-residue protein sequence, read N- to C-terminus: Phosphatidylserine decarboxylase proenzyme (48 aa).

It belongs to the phosphatidylserine decarboxylase family. Type 1 subfamily. Pyruvate is required as a cofactor.

It carries out the reaction a 1,2-diacyl-sn-glycero-3-phospho-L-serine + H(+) = a 1,2-diacyl-sn-glycero-3-phosphoethanolamine + CO2. Its pathway is phospholipid metabolism; phosphatidylethanolamine biosynthesis; phosphatidylethanolamine from CDP-diacylglycerol: step 2/2. In Azotobacter vinelandii, this protein is Phosphatidylserine decarboxylase proenzyme (psd).